We begin with the raw amino-acid sequence, 229 residues long: Large ribosomal subunit protein uL1 (229 aa).

Part of the 50S ribosomal subunit.

Functionally, directly binds to 23S rRNA. Forms what is known as the L1 stalk, which protrudes beyond the 70S ribosome surface. The stalk is preferentially stabilized in 70S versus 50S crystals. Interacts with the E site tRNA, blocking the exit path. This blockage implies that this section of the ribosome must be able to move to release the deacetylated tRNA. Protein L1 is also a translational repressor protein, it controls the translation of the L11 operon by binding to its mRNA. The protein is Large ribosomal subunit protein uL1 (rplA) of Thermus thermophilus (strain ATCC 27634 / DSM 579 / HB8).